The chain runs to 154 residues: 3-dehydroquinate dehydratase (154 aa).

The Proton acceptor role is filled by tyrosine 22. 3 residues coordinate substrate: asparagine 73, histidine 79, and aspartate 86. Residue histidine 99 is the Proton donor of the active site. Substrate-binding positions include 100-101 (LS) and arginine 110.

This sequence belongs to the type-II 3-dehydroquinase family. As to quaternary structure, homododecamer.

The catalysed reaction is 3-dehydroquinate = 3-dehydroshikimate + H2O. It participates in metabolic intermediate biosynthesis; chorismate biosynthesis; chorismate from D-erythrose 4-phosphate and phosphoenolpyruvate: step 3/7. Its function is as follows. Catalyzes a trans-dehydration via an enolate intermediate. The chain is 3-dehydroquinate dehydratase from Carboxydothermus hydrogenoformans (strain ATCC BAA-161 / DSM 6008 / Z-2901).